A 519-amino-acid polypeptide reads, in one-letter code: MDVEGAFADEEELAPHGGWASADFDPAEFGYEDSDDDFDAEDFDETEFSNPDFGEDYSDEDWEEIETAFGFDPSHLEEALCTVAIVGRPNVGKSTLVNRFIGRREAVVEDFPGVTRDRISYISDWGGHRFWVQDTGGWDPNVKGIHASIAQQAEVAMSTADVIVFVVDTKVGITETDSVMAAKLLRSEVPVILVANKFDSDSQWADMAEFYSLGLGDPYPVSAQHGRGGADVLDKVLELFPEEPRSKSIVEGPRRVALVGKPNVGKSSLLNKFAGETRSVVDNVAGTTVDPVDSLIQLDQKLWKFVDTAGLRKKVKTASGHEYYASLRTHGAIDAAELCVLLIDSSEPITEQDQRVLAMITDAGKALVIAFNKWDLMDEDRRIDLDRELDLQLAHVPWAKRINISAKTGRALQRLEPAMLEALDNWDRRISTGQLNTWLREAIAANPPPMRGGRLPRVLFATQASTQPPVIVLFTTGFLEAGYRRYLERKFRERFGFEGTPVRIAVRVRERRGKGGNKQ.

Composition is skewed to acidic residues over residues 1–12 (MDVEGAFADEEE) and 30–54 (GYED…PDFG). A disordered region spans residues 1 to 54 (MDVEGAFADEEELAPHGGWASADFDPAEFGYEDSDDDFDAEDFDETEFSNPDFG). 2 EngA-type G domains span residues 81–244 (CTVA…PEEP) and 254–427 (RRVA…DNWD). Residues 87 to 94 (GRPNVGKS), 134 to 138 (DTGGW), 196 to 199 (NKFD), 260 to 267 (GKPNVGKS), 307 to 311 (DTAGL), and 372 to 375 (NKWD) contribute to the GTP site. One can recognise a KH-like domain in the interval 428–510 (RRISTGQLNT…PVRIAVRVRE (83 aa)).

Belongs to the TRAFAC class TrmE-Era-EngA-EngB-Septin-like GTPase superfamily. EngA (Der) GTPase family. As to quaternary structure, associates with the 50S ribosomal subunit.

Functionally, GTPase that plays an essential role in the late steps of ribosome biogenesis. The polypeptide is GTPase Der (Corynebacterium glutamicum (strain ATCC 13032 / DSM 20300 / JCM 1318 / BCRC 11384 / CCUG 27702 / LMG 3730 / NBRC 12168 / NCIMB 10025 / NRRL B-2784 / 534)).